Here is a 477-residue protein sequence, read N- to C-terminus: Delayed-rectifier potassium channel regulatory subunit KCNS2 (477 aa).

Topologically, residues 1–184 (MTRQSLWDVS…LALDNPGYSV (184 aa)) are cytoplasmic. The helical transmembrane segment at 185–206 (LSRVFSVLSILVVLGSIITMCL) threads the bilayer. Topologically, residues 207–225 (NSLPDFQIPDSQGNPGEDP) are extracellular. A helical transmembrane segment spans residues 226-248 (RFEIVEHFGIAWFTFELVARFAV). The Cytoplasmic portion of the chain corresponds to 249-259 (APDFLKFFKNA). A helical membrane pass occupies residues 260 to 280 (LNLIDLMSIVPFYITLVVNLV). The Extracellular portion of the chain corresponds to 281-290 (VESSPTLANL). Residues 291–311 (GRVAQVLRLMRIFRILKLARH) traverse the membrane as a helical; Voltage-sensor segment. Residues 312 to 326 (STGLRSLGATLKYSY) lie on the Cytoplasmic side of the membrane. The chain crosses the membrane as a helical span at residues 327-348 (KEVGLLLLYLSVGISIFSVVAY). Residues 349 to 361 (TIEKEENEGLATI) are Extracellular-facing. An intramembrane region (helical) is located at residues 362-373 (PACWWWATVSMT). Positions 374-379 (TVGYGD) match the Selectivity filter motif. The stretch at 374 to 381 (TVGYGDVV) is an intramembrane region. The Extracellular segment spans residues 382 to 388 (PGTTAGK). Residues 389-417 (LTASACILAGILVVVLPITLIFNKFSHFY) form a helical membrane-spanning segment. Residues 418–477 (RRQKQLESAMRSCDFGDGMKEVPSVNLRDYYAHKVKSLMASLTNMSRSSPSELSLDDSLH) are Cytoplasmic-facing.

Belongs to the potassium channel family. S (TC 1.A.1.2) subfamily. Kv9.2/KCNS2 sub-subfamily. In terms of assembly, heterotetramer with KCNB1 and KCNB2. Does not form homomultimers. Detected in brain, but not in the other tissues tested. Expression was highest in the olfactory bulb, cerebral cortex, hippocampus, habenula, basolateral amygdaloid nuclei and cerebellum.

The protein resides in the cell membrane. Functionally, potassium channel regulatory subunit that modulate the delayed rectifier voltage-gated potassium channel activity of KCNB1 and KCNB2 by altering their kinetics, expression levels, and shifting the half-inactivation potential to more polarized values. While it does not form functional channels on its own, it can form functional heterotetrameric channels with KCNB1 and KCNB2. Each regulatory subunit has unique regulatory properties that can lead to extensive inhibition, significant changes in kinetics, and/or substantial shifts in the voltage dependencies of the inactivation process. The protein is Delayed-rectifier potassium channel regulatory subunit KCNS2 of Mus musculus (Mouse).